A 621-amino-acid chain; its full sequence is Growth factor receptor-bound protein 10 (621 aa).

Composition is skewed to polar residues over residues 1–23 (MNND…SDTD) and 33–59 (HASN…QRSQ). The tract at residues 1 to 118 (MNNDINSSVE…PSQPPAKHCG (118 aa)) is disordered. Residues Ser50 and Ser96 each carry the phosphoserine modification. The segment covering 95-112 (GSPPSVAPSSLPPPPSQP) has biased composition (pro residues). A Ras-associating domain is found at 194-278 (LRKDVKVFSE…SKFLFRKNYA (85 aa)). The 110-residue stretch at 318–427 (CPEIQGFLQV…WMTAFRLLKY (110 aa)) folds into the PH domain. The residue at position 455 (Ser455) is a Phosphoserine; by MTOR and PKB/AKT1. Ser458 and Ser503 each carry phosphoserine. One can recognise an SH2 domain in the interval 520-601 (WFHGRISREE…SDLIQLVDFY (82 aa)).

This sequence belongs to the GRB7/10/14 family. In terms of assembly, interacts with ligand-activated tyrosine kinase receptors, including FGFR1, INSR, IGF1R, MET and PDGFRB in a phosphotyrosine-dependent manner through the SH2 domain. Poorly binds to the EGFR. Directly interacts with MAP3K14/NIK and is recruited to the EGFR-ERBB2 complex. Interacts with GIGYF1/PERQ1 and GIGYF2/TNRC15. When unphosphorylated, interacts with AKT1 and when phosphorylated with YWHAE/14-3-3 epsilon. Interacts with NEDD4. Interacts with LRP6, thus interfering with the binding of AXIN1 to LRP6. Binds to activated NRAS. In terms of processing, phosphorylated on serine residues upon EGF, FGF and PDGF stimulation. In terms of tissue distribution, widely expressed.

The protein localises to the cytoplasm. Phosphorylation by mTORC1 stabilizes and activates GRB10 constituting a feedback pathway by which mTORC1 inhibits INSR-dependent signaling. Functionally, adapter protein which modulates coupling of a number of cell surface receptor kinases with specific signaling pathways. Binds to, and suppress signals from, activated receptors tyrosine kinases, including the insulin (INSR) and insulin-like growth factor (IGF1R) receptors. The inhibitory effect can be achieved by 2 mechanisms: interference with the signaling pathway and increased receptor degradation. Delays and reduces AKT1 phosphorylation in response to insulin stimulation. Blocks association between INSR and IRS1 and IRS2 and prevents insulin-stimulated IRS1 and IRS2 tyrosine phosphorylation. Recruits NEDD4 to IGF1R, leading to IGF1R ubiquitination, increased internalization and degradation by both the proteasomal and lysosomal pathways. A similar role in the mediation of ubiquitination also has been suggested with INSR. Negatively regulates Wnt signaling by interacting with LRP6 intracellular portion and interfering with the binding of AXIN1 to LRP6. Positive regulator of the KDR/VEGFR-2 signaling pathway. May inhibit NEDD4-mediated degradation of KDR/VEGFR-2. The chain is Growth factor receptor-bound protein 10 (Grb10) from Mus musculus (Mouse).